Here is an 84-residue protein sequence, read N- to C-terminus: Gomesin-like peptide (84 aa).

The first 23 residues, 1–23 (MNRTRALVCLFLAVLILAHESEA), serve as a signal peptide directing secretion. Glutamine 24 is subject to Pyrrolidone carboxylic acid. Disulfide bonds link cysteine 25/cysteine 38 and cysteine 29/cysteine 34. Arginine 41 carries the arginine amide modification. Residues 42-84 (GKRSVEEPSGGAQVVEKRAVDDADIPSAVEERELDEEESIEFR) constitute a propeptide that is removed on maturation.

Expressed by the venom gland.

The protein localises to the secreted. Antibacterial peptide. The chain is Gomesin-like peptide from Hadronyche infensa (Fraser island funnel-web spider).